A 585-amino-acid chain; its full sequence is Exonuclease V, mitochondrial (585 aa).

The N-terminal 26 residues, 1–26 (MLGRALINKYGFLIHPRRFVHLNDKS), are a transit peptide targeting the mitochondrion. Cysteine 141 lines the [4Fe-4S] cluster pocket. Residues aspartate 270 and aspartate 320 each coordinate Mg(2+). 3 residues coordinate [4Fe-4S] cluster: cysteine 549, cysteine 552, and cysteine 558.

It belongs to the EXO5 family. As to quaternary structure, monomer. The cofactor is Mg(2+). [4Fe-4S] cluster is required as a cofactor.

Its subcellular location is the mitochondrion. Functionally, single strand DNA specific 5' exonuclease involved in mitochondrial DNA replication and recombination. Releases dinucleotides as main products of catalysis. Has the capacity to slide across 5'double-stranded DNA or 5'RNA sequences and resumes cutting two nucleotides downstream of the double-stranded-to-single-stranded junction or RNA-to-DNA junction, respectively. This chain is Exonuclease V, mitochondrial (EXO5), found in Saccharomyces cerevisiae (strain ATCC 204508 / S288c) (Baker's yeast).